Consider the following 231-residue polypeptide: Ribonuclease 3 (231 aa).

Residues 7–135 (IQAIESKLNF…ILGAVYLDGG (129 aa)) form the RNase III domain. Glutamate 48 contributes to the Mg(2+) binding site. The active site involves aspartate 52. Residues asparagine 121 and glutamate 124 each coordinate Mg(2+). Residue glutamate 124 is part of the active site. Residues 160-229 (NPKNRLQQFT…AKQALSTHDN (70 aa)) form the DRBM domain.

The protein belongs to the ribonuclease III family. Homodimer. It depends on Mg(2+) as a cofactor.

The protein resides in the cytoplasm. The enzyme catalyses Endonucleolytic cleavage to 5'-phosphomonoester.. Digests double-stranded RNA. Involved in the processing of primary rRNA transcript to yield the immediate precursors to the large and small rRNAs (23S and 16S). Processes some mRNAs, and tRNAs when they are encoded in the rRNA operon. Processes pre-crRNA and tracrRNA of type II CRISPR loci if present in the organism. The protein is Ribonuclease 3 of Chlamydia trachomatis serovar L2 (strain ATCC VR-902B / DSM 19102 / 434/Bu).